A 155-amino-acid chain; its full sequence is Small ribosomal subunit protein uS7 (155 aa).

It belongs to the universal ribosomal protein uS7 family. In terms of assembly, part of the 30S ribosomal subunit. Contacts proteins S9 and S11.

One of the primary rRNA binding proteins, it binds directly to 16S rRNA where it nucleates assembly of the head domain of the 30S subunit. Is located at the subunit interface close to the decoding center, probably blocks exit of the E-site tRNA. This is Small ribosomal subunit protein uS7 from Helicobacter pylori (strain Shi470).